A 213-amino-acid chain; its full sequence is Orotate phosphoribosyltransferase (213 aa).

Lys26 serves as a coordination point for 5-phospho-alpha-D-ribose 1-diphosphate. 34-35 provides a ligand contact to orotate; it reads FF. Residues 72 to 73, Arg99, Lys100, Lys103, His105, and 124 to 132 contribute to the 5-phospho-alpha-D-ribose 1-diphosphate site; these read YK and DDVITAGTA. Orotate-binding residues include Thr128 and Arg156.

It belongs to the purine/pyrimidine phosphoribosyltransferase family. PyrE subfamily. As to quaternary structure, homodimer. The cofactor is Mg(2+).

The catalysed reaction is orotidine 5'-phosphate + diphosphate = orotate + 5-phospho-alpha-D-ribose 1-diphosphate. It participates in pyrimidine metabolism; UMP biosynthesis via de novo pathway; UMP from orotate: step 1/2. Catalyzes the transfer of a ribosyl phosphate group from 5-phosphoribose 1-diphosphate to orotate, leading to the formation of orotidine monophosphate (OMP). This Pseudomonas savastanoi pv. phaseolicola (strain 1448A / Race 6) (Pseudomonas syringae pv. phaseolicola (strain 1448A / Race 6)) protein is Orotate phosphoribosyltransferase.